The primary structure comprises 415 residues: D-galactonate dehydratase family member RspA (415 aa).

Positions 48 and 133 each coordinate substrate. Catalysis depends on Tyr-170, which acts as the Proton donor/acceptor. A Mg(2+)-binding site is contributed by Asp-223. The Proton donor/acceptor role is filled by His-225. Mg(2+) contacts are provided by Glu-249, Asp-250, and Glu-275. Glu-275, Arg-296, His-325, Asp-329, and Glu-352 together coordinate substrate.

Belongs to the mandelate racemase/muconate lactonizing enzyme family. GalD subfamily. Mg(2+) is required as a cofactor.

The enzyme catalyses D-mannonate = 2-dehydro-3-deoxy-D-gluconate + H2O. Functionally, has low D-mannonate dehydratase activity (in vitro), suggesting that this is not a physiological substrate and that it has no significant role in D-mannonate degradation in vivo. Has no detectable activity with a panel of 70 other acid sugars (in vitro). In Escherichia coli O6:H1 (strain CFT073 / ATCC 700928 / UPEC), this protein is D-galactonate dehydratase family member RspA (rspA).